A 285-amino-acid chain; its full sequence is Acetyl-coenzyme A carboxylase carboxyl transferase subunit beta (285 aa).

Residues 29-285 (IMTKCPKCKK…ILKIHQEVSN (257 aa)) enclose the CoA carboxyltransferase N-terminal domain. Residues Cys33, Cys36, Cys52, and Cys55 each coordinate Zn(2+). The C4-type zinc finger occupies 33–55 (CPKCKKIMYTKELNENLNVCFNC).

Belongs to the AccD/PCCB family. In terms of assembly, acetyl-CoA carboxylase is a heterohexamer composed of biotin carboxyl carrier protein (AccB), biotin carboxylase (AccC) and two subunits each of ACCase subunit alpha (AccA) and ACCase subunit beta (AccD). Zn(2+) is required as a cofactor.

The protein localises to the cytoplasm. It catalyses the reaction N(6)-carboxybiotinyl-L-lysyl-[protein] + acetyl-CoA = N(6)-biotinyl-L-lysyl-[protein] + malonyl-CoA. The protein operates within lipid metabolism; malonyl-CoA biosynthesis; malonyl-CoA from acetyl-CoA: step 1/1. Functionally, component of the acetyl coenzyme A carboxylase (ACC) complex. Biotin carboxylase (BC) catalyzes the carboxylation of biotin on its carrier protein (BCCP) and then the CO(2) group is transferred by the transcarboxylase to acetyl-CoA to form malonyl-CoA. The chain is Acetyl-coenzyme A carboxylase carboxyl transferase subunit beta from Staphylococcus epidermidis (strain ATCC 12228 / FDA PCI 1200).